Reading from the N-terminus, the 335-residue chain is Holliday junction branch migration complex subunit RuvB (335 aa).

The tract at residues 4-184 (ADRIISGQAK…FGIVQRLEFY (181 aa)) is large ATPase domain (RuvB-L). ATP-binding positions include Ile23, Arg24, Gly65, Lys68, Thr69, Thr70, 131–133 (EDY), Arg174, Tyr184, and Arg221. Thr69 contributes to the Mg(2+) binding site. Residues 185-255 (SVEDLTSIVA…VAKQALSMLD (71 aa)) form a small ATPAse domain (RuvB-S) region. The head domain (RuvB-H) stretch occupies residues 258-335 (DAGFDYLDRK…RHFGLQKLSD (78 aa)). DNA-binding residues include Arg294, Arg313, and Arg318.

The protein belongs to the RuvB family. Homohexamer. Forms an RuvA(8)-RuvB(12)-Holliday junction (HJ) complex. HJ DNA is sandwiched between 2 RuvA tetramers; dsDNA enters through RuvA and exits via RuvB. An RuvB hexamer assembles on each DNA strand where it exits the tetramer. Each RuvB hexamer is contacted by two RuvA subunits (via domain III) on 2 adjacent RuvB subunits; this complex drives branch migration. In the full resolvosome a probable DNA-RuvA(4)-RuvB(12)-RuvC(2) complex forms which resolves the HJ.

The protein resides in the cytoplasm. It carries out the reaction ATP + H2O = ADP + phosphate + H(+). Its function is as follows. The RuvA-RuvB-RuvC complex processes Holliday junction (HJ) DNA during genetic recombination and DNA repair, while the RuvA-RuvB complex plays an important role in the rescue of blocked DNA replication forks via replication fork reversal (RFR). RuvA specifically binds to HJ cruciform DNA, conferring on it an open structure. The RuvB hexamer acts as an ATP-dependent pump, pulling dsDNA into and through the RuvAB complex. RuvB forms 2 homohexamers on either side of HJ DNA bound by 1 or 2 RuvA tetramers; 4 subunits per hexamer contact DNA at a time. Coordinated motions by a converter formed by DNA-disengaged RuvB subunits stimulates ATP hydrolysis and nucleotide exchange. Immobilization of the converter enables RuvB to convert the ATP-contained energy into a lever motion, pulling 2 nucleotides of DNA out of the RuvA tetramer per ATP hydrolyzed, thus driving DNA branch migration. The RuvB motors rotate together with the DNA substrate, which together with the progressing nucleotide cycle form the mechanistic basis for DNA recombination by continuous HJ branch migration. Branch migration allows RuvC to scan DNA until it finds its consensus sequence, where it cleaves and resolves cruciform DNA. This is Holliday junction branch migration complex subunit RuvB from Haemophilus influenzae (strain PittEE).